The sequence spans 251 residues: tRNA-cytidine(32) 2-sulfurtransferase 2 (251 aa).

The short motif at 33–38 (SGGKDS) is the PP-loop motif element. 3 residues coordinate [4Fe-4S] cluster: C108, C111, and C199.

The protein belongs to the TtcA family. In terms of assembly, homodimer. It depends on Mg(2+) as a cofactor. Requires [4Fe-4S] cluster as cofactor.

Its subcellular location is the cytoplasm. The enzyme catalyses cytidine(32) in tRNA + S-sulfanyl-L-cysteinyl-[cysteine desulfurase] + AH2 + ATP = 2-thiocytidine(32) in tRNA + L-cysteinyl-[cysteine desulfurase] + A + AMP + diphosphate + H(+). It functions in the pathway tRNA modification. Catalyzes the ATP-dependent 2-thiolation of cytidine in position 32 of tRNA, to form 2-thiocytidine (s(2)C32). The sulfur atoms are provided by the cysteine/cysteine desulfurase (IscS) system. In Francisella tularensis subsp. tularensis (strain WY96-3418), this protein is tRNA-cytidine(32) 2-sulfurtransferase 2.